The sequence spans 1159 residues: PAN2-PAN3 deadenylation complex catalytic subunit pan2 (1159 aa).

Residues 276–315 (ANVSFMLGIDISPSGEALAINDAECMVHLWGSPAKIHFNE) form a WD repeat. Residues 316 to 451 (MSKEVELADV…GAKLNGEAED (136 aa)) form a linker region. The USP domain maps to 452–821 (DPLLKYSNVE…VPCVLAFQVK (370 aa)). Residues 872–1048 (LDTEFVDLEK…IEDARMALRL (177 aa)) form the Exonuclease domain. 4 residues coordinate a divalent metal cation: Asp873, Glu875, Asp982, and Asp1041. The segment at 1094-1159 (TAVTMQNTNS…GDFFGGSPLK (66 aa)) is disordered. Residues 1096–1106 (VTMQNTNSGRN) show a composition bias toward polar residues. A compositionally biased stretch (low complexity) spans 1107-1128 (TPTVPDAAGAPAVPASAPTTPG). The segment covering 1143–1153 (TFSGPGAGDFF) has biased composition (gly residues).

The protein belongs to the peptidase C19 family. PAN2 subfamily. Forms a heterotrimer with an asymmetric homodimer of the regulatory subunit pan3 to form the poly(A)-nuclease (PAN) deadenylation complex. It depends on a divalent metal cation as a cofactor.

It localises to the cytoplasm. The enzyme catalyses Exonucleolytic cleavage of poly(A) to 5'-AMP.. Positively regulated by the regulatory subunit pan3. Catalytic subunit of the poly(A)-nuclease (PAN) deadenylation complex, one of two cytoplasmic mRNA deadenylases involved in mRNA turnover. PAN specifically shortens poly(A) tails of RNA and the activity is stimulated by poly(A)-binding protein pab1. PAN deadenylation is followed by rapid degradation of the shortened mRNA tails by the CCR4-NOT complex. Deadenylated mRNAs are then degraded by two alternative mechanisms, namely exosome-mediated 3'-5' exonucleolytic degradation, or deadenylation-dependent mRNA decaping and subsequent 5'-3' exonucleolytic degradation by xrn1. May also be involved in post-transcriptional maturation of mRNA poly(A) tails. The chain is PAN2-PAN3 deadenylation complex catalytic subunit pan2 from Aspergillus terreus (strain NIH 2624 / FGSC A1156).